A 283-amino-acid chain; its full sequence is Small ribosomal subunit protein uS3 (283 aa).

Residues 39 to 107 (VRAYLKTKLK…PVHVNIEEIR (69 aa)) enclose the KH type-2 domain. The disordered stretch occupies residues 209–283 (PSGEPPVDLT…GAVPAEKAGE (75 aa)). The span at 217 to 235 (LTKEDDTKRRGPRRDDGKP) shows a compositional bias: basic and acidic residues. Residues 244 to 260 (PEGQPGAAAAPGAAPAA) show a composition bias toward low complexity.

Belongs to the universal ribosomal protein uS3 family. Part of the 30S ribosomal subunit. Forms a tight complex with proteins S10 and S14.

Its function is as follows. Binds the lower part of the 30S subunit head. Binds mRNA in the 70S ribosome, positioning it for translation. The chain is Small ribosomal subunit protein uS3 from Herminiimonas arsenicoxydans.